The primary structure comprises 102 residues: Large ribosomal subunit protein bL21 (102 aa).

This sequence belongs to the bacterial ribosomal protein bL21 family. As to quaternary structure, part of the 50S ribosomal subunit. Contacts protein L20.

Its function is as follows. This protein binds to 23S rRNA in the presence of protein L20. In Myxococcus xanthus (strain DK1622), this protein is Large ribosomal subunit protein bL21.